We begin with the raw amino-acid sequence, 56 residues long: uncharacterized protein (56 aa).

Belongs to the archaeal ATPase family.

This is an uncharacterized protein from Methanocaldococcus jannaschii (strain ATCC 43067 / DSM 2661 / JAL-1 / JCM 10045 / NBRC 100440) (Methanococcus jannaschii).